The following is a 296-amino-acid chain: DNA repair protein complementing XP-A cells homolog (296 aa).

Polar residues predominate over residues 1–10 (MSAEVSTNES). The segment at 1-39 (MSAEVSTNESAPPAEKKSKLTNAQKARIERNQAKAQKLR) is disordered. Positions 26–39 (ARIERNQAKAQKLR) are enriched in basic and acidic residues. A Nuclear localization signal motif is present at residues 26–47 (ARIERNQAKAQKLREAKLVSHP). Cys126, Cys129, Cys147, and Cys150 together coordinate Zn(2+). A zinc finger lies at 126–150 (CLECGDMFADSYLFNNFGHSVCDKC).

This sequence belongs to the XPA family. In terms of tissue distribution, strongly expressed in the central nervous system and muscles.

The protein resides in the nucleus. Involved in DNA excision repair. Initiates repair by binding to damaged sites with various affinities, depending on the photoproduct and the transcriptional state of the region. The protein is DNA repair protein complementing XP-A cells homolog (Xpac) of Drosophila melanogaster (Fruit fly).